Reading from the N-terminus, the 622-residue chain is WD repeat-containing protein 70 (622 aa).

The segment covering 37-55 has biased composition (basic and acidic residues); the sequence is TAVERSKKTLEAREKEEQI. The interval 37–141 is disordered; the sequence is TAVERSKKTL…DNPVKGIPDS (105 aa). Residues 67-84 are compositionally biased toward low complexity; that stretch reads SSSRQKNTDTSSSSSGSE. A compositionally biased stretch (acidic residues) spans 120-132; the sequence is SDDEDEEQHEDDD. WD repeat units follow at residues 148-187, 195-236, 249-289, 298-337, 344-383, 389-434, and 437-476; these read HGTK…ASLQ, CECH…ECVK, GHTA…KHKG, GKRV…HTKF, TPGT…NPLN, ANYF…KVYE, and VTEA…QRGA. Residues 508–533 are compositionally biased toward basic and acidic residues; sequence REPRQRSTRKQLEKDRLDPVKSHKPE. Disordered regions lie at residues 508–549 and 602–622; these read REPR…GTHG and AEVE…KRKI. The segment covering 539-549 has biased composition (gly residues); it reads PGRGGRVGTHG. Acidic residues predominate over residues 604 to 614; that stretch reads VESDEEETDNE.

Belongs to the WD repeat GAD-1 family.

The polypeptide is WD repeat-containing protein 70 (wdr70) (Xenopus tropicalis (Western clawed frog)).